The chain runs to 120 residues: Response regulator receiver protein CpdR (120 aa).

A Response regulatory domain is found at 3 to 117 (RILLAEDDND…DLVNEIEKML (115 aa)). At aspartate 52 the chain carries 4-aspartylphosphate.

In terms of processing, is phosphorylated by ChpT-P on Asp-52.

The protein localises to the cytoplasm. Functionally, component of a regulatory phosphorelay system that controls B.abortus cell growth, division, and intracellular survival inside mammalian host cells. This signaling pathway is composed of CckA, ChpT, CtrA and CpdR. CpdR is a response regulator substrate of ChpT. Unphosphorylated CpdR controls steady-state levels of CtrA in the B.abortus cell, likely via CtrA destabilization and activation of its proteolysis. The sequence is that of Response regulator receiver protein CpdR from Brucella abortus (strain 2308).